We begin with the raw amino-acid sequence, 348 residues long: Ferrochelatase (348 aa).

The Fe cation site is built by His218 and Glu299.

Belongs to the ferrochelatase family.

It localises to the cytoplasm. The catalysed reaction is heme b + 2 H(+) = protoporphyrin IX + Fe(2+). It functions in the pathway porphyrin-containing compound metabolism; protoheme biosynthesis; protoheme from protoporphyrin-IX: step 1/1. Functionally, catalyzes the ferrous insertion into protoporphyrin IX. The protein is Ferrochelatase of Methylocella silvestris (strain DSM 15510 / CIP 108128 / LMG 27833 / NCIMB 13906 / BL2).